The primary structure comprises 53 residues: Light-harvesting protein B800/850/890 beta-1 chain (53 aa).

Topologically, residues 1–19 (ADNMSLTGLSDEEAKEFHS) are cytoplasmic. The a bacteriochlorophyll site is built by His-18 and His-36. The chain crosses the membrane as a helical span at residues 20 to 42 (IFMQSFLIFTAVAVVAHFLAWAW). Residues 43 to 53 (RPWIPGAEGYG) lie on the Periplasmic side of the membrane.

This sequence belongs to the antenna complex beta subunit family. In terms of assembly, the core complex is formed by different alpha and beta chains, binding bacteriochlorophyll molecules, and arranged most probably in tetrameric structures disposed around the reaction center. The non-pigmented gamma chains may constitute additional components.

Its subcellular location is the cell inner membrane. Antenna complexes are light-harvesting systems, which transfer the excitation energy to the reaction centers. In Halorhodospira halophila (strain DSM 244 / SL1) (Ectothiorhodospira halophila (strain DSM 244 / SL1)), this protein is Light-harvesting protein B800/850/890 beta-1 chain.